Reading from the N-terminus, the 143-residue chain is Small ribosomal subunit protein bS6 (143 aa).

A disordered region spans residues 96 to 143 (VTEASPMAAAKEERRDDRREVKKDVAAAPVEAKEDSVEEKSEEAASEE). Basic and acidic residues predominate over residues 105-143 (AKEERRDDRREVKKDVAAAPVEAKEDSVEEKSEEAASEE).

Belongs to the bacterial ribosomal protein bS6 family.

Functionally, binds together with bS18 to 16S ribosomal RNA. This Colwellia psychrerythraea (strain 34H / ATCC BAA-681) (Vibrio psychroerythus) protein is Small ribosomal subunit protein bS6.